Reading from the N-terminus, the 357-residue chain is Protein RecA (357 aa).

Residue 67-74 participates in ATP binding; that stretch reads GPESSGKT. Positions 335–357 are disordered; that stretch reads LASSASDDESTEGNIDLETGEIF.

Belongs to the RecA family.

The protein localises to the cytoplasm. Can catalyze the hydrolysis of ATP in the presence of single-stranded DNA, the ATP-dependent uptake of single-stranded DNA by duplex DNA, and the ATP-dependent hybridization of homologous single-stranded DNAs. It interacts with LexA causing its activation and leading to its autocatalytic cleavage. This chain is Protein RecA, found in Shewanella putrefaciens (strain CN-32 / ATCC BAA-453).